Consider the following 860-residue polypeptide: LPS-assembly protein LptD (860 aa).

The signal sequence occupies residues 1–21 (MTKRYFSLLAVCSAIATSTFA).

Belongs to the LptD family. As to quaternary structure, component of the lipopolysaccharide transport and assembly complex. Interacts with LptE and LptA.

The protein resides in the cell outer membrane. Its function is as follows. Together with LptE, is involved in the assembly of lipopolysaccharide (LPS) at the surface of the outer membrane. The chain is LPS-assembly protein LptD from Saccharophagus degradans (strain 2-40 / ATCC 43961 / DSM 17024).